We begin with the raw amino-acid sequence, 123 residues long: Small ribosomal subunit protein uS13c (123 aa).

The disordered stretch occupies residues glycine 90–lysine 123. A compositionally biased stretch (basic residues) spans glutamine 102–lysine 123.

It belongs to the universal ribosomal protein uS13 family. In terms of assembly, part of the 30S ribosomal subunit.

The protein localises to the plastid. It is found in the chloroplast. Functionally, located at the top of the head of the 30S subunit, it contacts several helices of the 16S rRNA. In Thalassiosira pseudonana (Marine diatom), this protein is Small ribosomal subunit protein uS13c.